The sequence spans 377 residues: Aquaporin-2 (377 aa).

Residues methionine 1–histidine 14 lie on the Cytoplasmic side of the membrane. A helical membrane pass occupies residues phenylalanine 15–glycine 35. Over threonine 36–asparagine 56 the chain is Extracellular. Residue asparagine 40 is glycosylated (N-linked (GlcNAc...) asparagine). The helical transmembrane segment at glutamine 57 to phenylalanine 77 threads the bilayer. Residues arginine 78 to alanine 87 lie on the Cytoplasmic side of the membrane. The NPA 1 motif lies at asparagine 85 to alanine 87. Residues valine 88–isoleucine 108 form a helical membrane-spanning segment. Over alanine 109–glutamine 144 the chain is Extracellular. A helical transmembrane segment spans residues glycine 145–alanine 165. The Cytoplasmic segment spans residues glutamate 166–threonine 171. The helical transmembrane segment at phenylalanine 172 to tryptophan 192 threads the bilayer. Residues threonine 193–histidine 215 lie on the Extracellular side of the membrane. The NPA 2 motif lies at asparagine 198–alanine 200. The helical transmembrane segment at tryptophan 216–isoleucine 236 threads the bilayer. Over lysine 237–proline 377 the chain is Cytoplasmic. Disordered regions lie at residues leucine 278 to glutamate 332 and arginine 358 to proline 377. Composition is skewed to polar residues over residues proline 315–isoleucine 328 and alanine 368–proline 377.

Belongs to the MIP/aquaporin (TC 1.A.8) family.

The protein resides in the membrane. It carries out the reaction H2O(in) = H2O(out). The enzyme catalyses glycerol(in) = glycerol(out). In terms of biological role, water channel required to facilitate the transport of water across membranes. Involved in conidiation. This is Aquaporin-2 from Botryotinia fuckeliana (strain B05.10) (Noble rot fungus).